Reading from the N-terminus, the 516-residue chain is Gamma-aminobutyrate transaminase 1, mitochondrial (516 aa).

The N-terminal 47 residues, 1 to 47, are a transit peptide targeting the mitochondrion; the sequence is MVIARGLLRSNASSSSSQAINLLKYVTSTGSLQGHTQNLCDASTRHF. 171 to 172 lines the pyridoxal 5'-phosphate pocket; the sequence is GS. Tyr204 is a binding site for substrate. Asp311 contributes to the pyridoxal 5'-phosphate binding site. Lys340 contributes to the substrate binding site. Lys340 is subject to N6-(pyridoxal phosphate)lysine.

This sequence belongs to the class-III pyridoxal-phosphate-dependent aminotransferase family. Expressed in roots, stems and panicles.

It localises to the mitochondrion. The enzyme catalyses 4-aminobutanoate + pyruvate = succinate semialdehyde + L-alanine. It carries out the reaction 4-aminobutanoate + glyoxylate = succinate semialdehyde + glycine. Its function is as follows. Transaminase that degrades gamma-amino butyric acid (GABA) and uses pyruvate as amino-group acceptor, but not 2-oxoglutarate. Not involved in the interaction with blast fungus. The sequence is that of Gamma-aminobutyrate transaminase 1, mitochondrial (OSL2) from Oryza sativa subsp. japonica (Rice).